A 496-amino-acid chain; its full sequence is Probable cytosol aminopeptidase (496 aa).

Positions 251 and 256 each coordinate Mn(2+). The active site involves lysine 263. Residues aspartate 274, aspartate 333, and glutamate 335 each coordinate Mn(2+). The active site involves arginine 337.

This sequence belongs to the peptidase M17 family. It depends on Mn(2+) as a cofactor.

It is found in the cytoplasm. The catalysed reaction is Release of an N-terminal amino acid, Xaa-|-Yaa-, in which Xaa is preferably Leu, but may be other amino acids including Pro although not Arg or Lys, and Yaa may be Pro. Amino acid amides and methyl esters are also readily hydrolyzed, but rates on arylamides are exceedingly low.. The enzyme catalyses Release of an N-terminal amino acid, preferentially leucine, but not glutamic or aspartic acids.. Presumably involved in the processing and regular turnover of intracellular proteins. Catalyzes the removal of unsubstituted N-terminal amino acids from various peptides. The chain is Probable cytosol aminopeptidase from Acidovorax ebreus (strain TPSY) (Diaphorobacter sp. (strain TPSY)).